Here is a 106-residue protein sequence, read N- to C-terminus: uncharacterized protein (106 aa).

The N-terminal stretch at 1–31 (MNNERLMLKGIFLGAAAGAALSLLHKPTRQA) is a signal peptide. Positions 57–89 (VITKVDEAKKLARTLSKEVDFVNQQVKELKKTT) form a coiled coil.

This is an uncharacterized protein from Bacillus subtilis (strain 168).